We begin with the raw amino-acid sequence, 434 residues long: Histidinol dehydrogenase (434 aa).

Residues Tyr-130, Gln-188, and Asn-211 each coordinate NAD(+). Residues Ser-237, Gln-259, and His-262 each contribute to the substrate site. 2 residues coordinate Zn(2+): Gln-259 and His-262. Active-site proton acceptor residues include Glu-326 and His-327. 4 residues coordinate substrate: His-327, Asp-360, Glu-414, and His-419. Residue Asp-360 participates in Zn(2+) binding. Residue His-419 coordinates Zn(2+).

The protein belongs to the histidinol dehydrogenase family. In terms of assembly, homodimer. Zn(2+) serves as cofactor. The cofactor is Mn(2+).

It catalyses the reaction L-histidinol + 2 NAD(+) + H2O = L-histidine + 2 NADH + 3 H(+). It functions in the pathway amino-acid biosynthesis; L-histidine biosynthesis; L-histidine from 5-phospho-alpha-D-ribose 1-diphosphate: step 9/9. Its activity is regulated as follows. Activity is lost when the metal is removed through urea denaturation or chelation, and can be regained by addition of metal. Functionally, catalyzes the sequential NAD-dependent oxidations of L-histidinol to L-histidinaldehyde and then to L-histidine. The polypeptide is Histidinol dehydrogenase (hisD) (Salmonella typhimurium (strain LT2 / SGSC1412 / ATCC 700720)).